Consider the following 232-residue polypeptide: dTTP/UTP pyrophosphatase (232 aa).

D103 serves as the catalytic Proton acceptor.

Belongs to the Maf family. YhdE subfamily. A divalent metal cation serves as cofactor.

Its subcellular location is the cytoplasm. It carries out the reaction dTTP + H2O = dTMP + diphosphate + H(+). It catalyses the reaction UTP + H2O = UMP + diphosphate + H(+). The enzyme catalyses 5-methyl-UTP + H2O = 5-methyl-UMP + diphosphate + H(+). The catalysed reaction is psi-UTP + H2O = psi-UMP + diphosphate + H(+). Functionally, nucleoside triphosphate pyrophosphatase that hydrolyzes dTTP and UTP. Can also hydrolyze the modified nucleotides 5-methyl-UTP (m(5)UTP) and pseudo-UTP. Has weak activity with CTP. May have a dual role in cell division arrest and in preventing the incorporation of modified nucleotides into cellular nucleic acids. This is dTTP/UTP pyrophosphatase from Saccharomyces cerevisiae (strain ATCC 204508 / S288c) (Baker's yeast).